A 252-amino-acid chain; its full sequence is Type I iodothyronine deiodinase (252 aa).

Residues 1–17 (MESLLQTIKLMLRYIQK) are Extracellular-facing. A helical; Signal-anchor for type III membrane protein membrane pass occupies residues 18–38 (ALILFFLFLYVVVGKVLMFLF). Residues 39 to 252 (PQTMASVLKS…EVCSVLEKKK (214 aa)) are Cytoplasmic-facing. U130 is an active-site residue. Position 130 (U130) is a non-standard amino acid, selenocysteine.

Belongs to the iodothyronine deiodinase family. As to quaternary structure, predominantly monomer. Can form homodimers but homodimerization is not essential for enzyme activity.

It is found in the cell membrane. The protein resides in the endoplasmic reticulum membrane. It localises to the basolateral cell membrane. The catalysed reaction is 3,3',5-triiodo-L-thyronine + iodide + A + H(+) = L-thyroxine + AH2. It carries out the reaction 3,3',5'-triiodo-L-thyronine + iodide + A + H(+) = L-thyroxine + AH2. The enzyme catalyses 3,3'-diiodo-L-thyronine + iodide + A + H(+) = 3,3',5'-triiodo-L-thyronine + AH2. It catalyses the reaction 3,3'-diiodo-L-thyronine + iodide + A + H(+) = 3,3',5-triiodo-L-thyronine + AH2. The catalysed reaction is 3'-iodo-L-thyronine + iodide + A + H(+) = 3',5'-diiodo-L-thyronine + AH2. It carries out the reaction 3-iodo-L-thyronine + iodide + A + H(+) = 3,5-diiodo-L-thyronine + AH2. The enzyme catalyses 3-iodo-L-thyronine + iodide + A + H(+) = 3,3'-diiodo-L-thyronine + AH2. It catalyses the reaction 3,3'-diiodothyronamine + iodide + A + H(+) = 3,3',5'-triiodothyronamine + AH2. The catalysed reaction is 3'-iodothyronamine + iodide + A + H(+) = 3',5'-diiodothyronamine + AH2. It carries out the reaction 3-iodothyronamine + iodide + A + H(+) = 3,3'-diiodothyronamine + AH2. The enzyme catalyses 3,3'-diiodothyronamine + iodide + A + H(+) = 3,3',5-triiodothyronamine + AH2. It catalyses the reaction 3-iodothyronamine + iodide + A + H(+) = 3,5-diiodothyronamine + AH2. The catalysed reaction is 3,3'-diiodo-L-thyronine sulfate + iodide + A + H(+) = 3,3',5'-triiodo-L-thyronine sulfate + AH2. It carries out the reaction 3,3',5'-triiodo-L-thyronine sulfate + iodide + A + H(+) = L-thyroxine sulfate + AH2. The enzyme catalyses 3,3'-diiodo-L-thyronine sulfate + iodide + A + H(+) = 3,3',5-triiodo-L-thyronine sulfate + AH2. Lacks sensitivity to 6-n-propylthiouracil. Its function is as follows. Plays a crucial role in the metabolism of thyroid hormones (TH) and has specific roles in TH activation and inactivation by deiodination. Catalyzes the deiodination of L-thyroxine (T4) to 3,5,3'-triiodothyronine (T3) and 3,3',5'-triiodothyronine (rT3) to 3,3'-diiodothyronine (3,3'-T2) via outer-ring deiodination (ORD). Catalyzes the deiodiantion of T4 to rT3 and T3 to 3,3'-T2 via inner-ring deiodination (IRD). Catalyzes the deiodination of 3',5'-diiodothyronine (3',5'-T2) to 3'-monoiodothyronine (3'-T1) via ORD. Catalyzes the deiodination of 3,5-diiodothyronine (3,5-T2) to 3-monoiodothyronine (3-T1) and 3,3'-T2 to 3-T1 via IRD. Catalyzes the phenolic ring deiodinations of 3,3',5'-triiodothyronamine, 3',5'-diiodothyronamine and 3,3'-diiodothyronamine as well as tyrosyl ring deiodinations of 3,5,3'-triiodothyronamine and 3,5-diiodothyronamine. Catalyzes the deiodination of L-thyroxine sulfate and 3,3',5-triiodo-L-thyronine sulfate via IRD and of 3,3',5'-triiodo-L-thyronine sulfate via ORD. The chain is Type I iodothyronine deiodinase (dio1) from Xenopus laevis (African clawed frog).